The following is a 205-amino-acid chain: Thiamine-phosphate synthase (205 aa).

Residues 35-39 (QYRDK) and Asn-67 each bind 4-amino-2-methyl-5-(diphosphooxymethyl)pyrimidine. Mg(2+)-binding residues include Asp-68 and Asp-86. Thr-105 contributes to the 4-amino-2-methyl-5-(diphosphooxymethyl)pyrimidine binding site. Residue 132-134 (SLT) participates in 2-[(2R,5Z)-2-carboxy-4-methylthiazol-5(2H)-ylidene]ethyl phosphate binding. Lys-135 contacts 4-amino-2-methyl-5-(diphosphooxymethyl)pyrimidine. Gly-162 provides a ligand contact to 2-[(2R,5Z)-2-carboxy-4-methylthiazol-5(2H)-ylidene]ethyl phosphate.

This sequence belongs to the thiamine-phosphate synthase family. Requires Mg(2+) as cofactor.

The catalysed reaction is 2-[(2R,5Z)-2-carboxy-4-methylthiazol-5(2H)-ylidene]ethyl phosphate + 4-amino-2-methyl-5-(diphosphooxymethyl)pyrimidine + 2 H(+) = thiamine phosphate + CO2 + diphosphate. It carries out the reaction 2-(2-carboxy-4-methylthiazol-5-yl)ethyl phosphate + 4-amino-2-methyl-5-(diphosphooxymethyl)pyrimidine + 2 H(+) = thiamine phosphate + CO2 + diphosphate. The enzyme catalyses 4-methyl-5-(2-phosphooxyethyl)-thiazole + 4-amino-2-methyl-5-(diphosphooxymethyl)pyrimidine + H(+) = thiamine phosphate + diphosphate. The protein operates within cofactor biosynthesis; thiamine diphosphate biosynthesis; thiamine phosphate from 4-amino-2-methyl-5-diphosphomethylpyrimidine and 4-methyl-5-(2-phosphoethyl)-thiazole: step 1/1. Functionally, condenses 4-methyl-5-(beta-hydroxyethyl)thiazole monophosphate (THZ-P) and 2-methyl-4-amino-5-hydroxymethyl pyrimidine pyrophosphate (HMP-PP) to form thiamine monophosphate (TMP). In Pseudomonas syringae pv. syringae (strain B728a), this protein is Thiamine-phosphate synthase.